A 388-amino-acid polypeptide reads, in one-letter code: Leucine aminopeptidase 1 (388 aa).

The first 19 residues, 1–19 (MRVLAAIALGATGLRGALA), serve as a signal peptide directing secretion. A propeptide spanning residues 20-88 (AVVPQEVLGT…YPTLNSASYV (69 aa)) is cleaved from the precursor. N-linked (GlcNAc...) asparagine glycans are attached at residues N106 and N180. H188 and D207 together coordinate Zn(2+). N232 carries an N-linked (GlcNAc...) asparagine glycan. Residues E246 and D273 each coordinate Zn(2+). A disulfide bridge links C322 with C326. H355 contacts Zn(2+).

It belongs to the peptidase M28 family. M28E subfamily. In terms of assembly, monomer. Zn(2+) serves as cofactor.

Its subcellular location is the secreted. Extracellular aminopeptidase that allows assimilation of proteinaceous substrates. This is Leucine aminopeptidase 1 (lap1) from Aspergillus clavatus (strain ATCC 1007 / CBS 513.65 / DSM 816 / NCTC 3887 / NRRL 1 / QM 1276 / 107).